The sequence spans 958 residues: Protein translocase subunit SecA (958 aa).

ATP is bound by residues Gln87, 105 to 109 (GEGKT), and Asp524. Residues 598-617 (RRIDNQLRGRSGRQGDPGRS) are disordered. Residues Cys939, Cys941, Cys950, and His951 each contribute to the Zn(2+) site.

It belongs to the SecA family. In terms of assembly, monomer and homodimer. Part of the essential Sec protein translocation apparatus which comprises SecA, SecYEG and auxiliary proteins SecDF-YajC and YidC. It depends on Zn(2+) as a cofactor.

The protein localises to the cell inner membrane. It localises to the cytoplasm. It carries out the reaction ATP + H2O + cellular proteinSide 1 = ADP + phosphate + cellular proteinSide 2.. Its function is as follows. Part of the Sec protein translocase complex. Interacts with the SecYEG preprotein conducting channel. Has a central role in coupling the hydrolysis of ATP to the transfer of proteins into and across the cell membrane, serving both as a receptor for the preprotein-SecB complex and as an ATP-driven molecular motor driving the stepwise translocation of polypeptide chains across the membrane. This is Protein translocase subunit SecA from Methylobacterium sp. (strain 4-46).